We begin with the raw amino-acid sequence, 263 residues long: Endonuclease NucS (263 aa).

It belongs to the NucS endonuclease family.

It localises to the cytoplasm. Functionally, cleaves both 3' and 5' ssDNA extremities of branched DNA structures. The protein is Endonuclease NucS of Methanocaldococcus jannaschii (strain ATCC 43067 / DSM 2661 / JAL-1 / JCM 10045 / NBRC 100440) (Methanococcus jannaschii).